A 571-amino-acid chain; its full sequence is Proline--tRNA ligase (571 aa).

It belongs to the class-II aminoacyl-tRNA synthetase family. ProS type 1 subfamily. As to quaternary structure, homodimer.

Its subcellular location is the cytoplasm. The catalysed reaction is tRNA(Pro) + L-proline + ATP = L-prolyl-tRNA(Pro) + AMP + diphosphate. Functionally, catalyzes the attachment of proline to tRNA(Pro) in a two-step reaction: proline is first activated by ATP to form Pro-AMP and then transferred to the acceptor end of tRNA(Pro). As ProRS can inadvertently accommodate and process non-cognate amino acids such as alanine and cysteine, to avoid such errors it has two additional distinct editing activities against alanine. One activity is designated as 'pretransfer' editing and involves the tRNA(Pro)-independent hydrolysis of activated Ala-AMP. The other activity is designated 'posttransfer' editing and involves deacylation of mischarged Ala-tRNA(Pro). The misacylated Cys-tRNA(Pro) is not edited by ProRS. The chain is Proline--tRNA ligase from Vibrio cholerae serotype O1 (strain ATCC 39541 / Classical Ogawa 395 / O395).